The sequence spans 169 residues: N-alpha-acetyltransferase 50 (169 aa).

The N-acetyltransferase domain maps to 6–155 (IELGDVTPHN…DAHVLQKNLK (150 aa)). Position 12 is a phosphothreonine (threonine 12). Tyrosine 31 is a binding site for substrate. Lysine 34 and lysine 37 each carry N6-acetyllysine. Residue tyrosine 73 is part of the active site. Position 75 (methionine 75) interacts with substrate. 77–90 (LGCLAPYRRLGIGT) lines the acetyl-CoA pocket. A Phosphotyrosine modification is found at tyrosine 110. Residue histidine 112 is part of the active site. 117 to 126 (NESAIDFYRK) contacts CoA. The segment at 138-141 (YYKR) is substrate. Lysine 140 is modified (N6-acetyllysine).

Belongs to the acetyltransferase family. GNAT subfamily. In terms of assembly, component of the N-terminal acetyltransferase E (NatE) complex at least composed of NAA10, NAA15 and NAA50. Interacts with NAA10. Interacts with NAA15. Predominantly interacts with NAA15 in the N-terminal acetyltransferase A complex (NatA complex); the interactions reduce the acetylation activity of the NatA complex. Component of the N-terminal acetyltransferase E (NatE)/HYPK complex at least composed of NAA10, NAA15, NAA50 and HYPK. Within the complex interacts with NAA15. Its capacity to interact with the NatA complex is reduced by HYPK. Interacts with NAA35.

Its subcellular location is the cytoplasm. The protein localises to the nucleus. It carries out the reaction N-terminal L-methionyl-L-alanyl-[protein] + acetyl-CoA = N-terminal N(alpha)-acetyl-L-methionyl-L-alanyl-[protein] + CoA + H(+). The catalysed reaction is N-terminal L-methionyl-L-seryl-[protein] + acetyl-CoA = N-terminal N(alpha)-acetyl-L-methionyl-L-seryl-[protein] + CoA + H(+). The enzyme catalyses N-terminal L-methionyl-L-valyl-[protein] + acetyl-CoA = N-terminal N(alpha)-acetyl-L-methionyl-L-valyl-[protein] + CoA + H(+). It catalyses the reaction N-terminal L-methionyl-L-threonyl-[protein] + acetyl-CoA = N-terminal N(alpha)-acetyl-L-methionyl-L-threonyl-[protein] + CoA + H(+). It carries out the reaction N-terminal L-methionyl-L-lysyl-[protein] + acetyl-CoA = N-terminal N(alpha)-acetyl-L-methionyl-L-lysyl-[protein] + CoA + H(+). The catalysed reaction is N-terminal L-methionyl-L-leucyl-[protein] + acetyl-CoA = N-terminal N(alpha)-acetyl-L-methionyl-L-leucyl-[protein] + CoA + H(+). The enzyme catalyses N-terminal L-methionyl-L-phenylalanyl-[protein] + acetyl-CoA = N-terminal N(alpha)-acetyl-L-methionyl-L-phenylalanyl-[protein] + CoA + H(+). It catalyses the reaction N-terminal L-methionyl-L-tyrosyl-[protein] + acetyl-CoA = N-terminal N(alpha)-acetyl-L-methionyl-L-tyrosyl-[protein] + CoA + H(+). Its function is as follows. N-alpha-acetyltransferase that acetylates the N-terminus of proteins that retain their initiating methionine. Has a broad substrate specificity: able to acetylate the initiator methionine of most peptides, except for those with a proline in second position. Also displays N-epsilon-acetyltransferase activity by mediating acetylation of the side chain of specific lysines on proteins. Autoacetylates in vivo. The relevance of N-epsilon-acetyltransferase activity is however unclear: able to acetylate H4 in vitro, but this result has not been confirmed in vivo. Component of N-alpha-acetyltransferase complexes containing NAA10 and NAA15, which has N-alpha-acetyltransferase activity. Does not influence the acetyltransferase activity of NAA10. However, it negatively regulates the N-alpha-acetyltransferase activity of the N-terminal acetyltransferase A complex (also called the NatA complex). The multiprotein complexes probably constitute the major contributor for N-terminal acetylation at the ribosome exit tunnel, with NAA10 acetylating all amino termini that are devoid of methionine and NAA50 acetylating other peptides. Required for sister chromatid cohesion during mitosis by promoting binding of CDCA5/sororin to cohesin: may act by counteracting the function of NAA10. This is N-alpha-acetyltransferase 50 (NAA50) from Bos taurus (Bovine).